The following is a 484-amino-acid chain: MKRNNLSSFYVSLWLLFTATMLQAVESAKGKYAQMLFNELFEDYSNALRPVEDTDKVLNVTLQITLSQIKDMDERNQILTAYLWIRQSWYDAYLKWDKDKYDGLDSIRIPSNLVWRPDIVLYNKADDDFSEPVNTNVVLRYDGKITWDAPAITKSSCVVDVSYFPFDSQQCNLTFGSWTYNGNQVDIINSLDSGDLSDFVEDVEWEIHGMPAVKNVITYGCCSEPYPDVTFTLILKRKSSFYIFNLLLPCILISFLAPLGFYLPADSGEKVSLGVTVLLALTVFQLMVAEIMPPSENVPLIGKYYIATMTMITASTALTIIIMNVHHCGSEAKPVPQWARVVILDYMSKIFFVYDVGENCTSPRREKEQEHRLEGGDMCRGGDGKSHLSSRNDDSDLKENLNGNWNKSFGVHGENVRENVNCCSCYKMLIKNIEYIANCVRDHKANRAKGIEWKKVAKVMDRFFMWIFFIMVFFMSVLIIGKAA.

The first 27 residues, 1–27 (MKRNNLSSFYVSLWLLFTATMLQAVES), serve as a signal peptide directing secretion. At 28 to 240 (AKGKYAQMLF…FTLILKRKSS (213 aa)) the chain is on the extracellular side. N-linked (GlcNAc...) asparagine glycosylation occurs at Asn59. Cys157 and Cys171 are joined by a disulfide. An N-linked (GlcNAc...) asparagine glycan is attached at Asn172. Residues Ser193 and Asp195 each coordinate Na(+). Cys221 and Cys222 form a disulfide bridge. A run of 3 helical transmembrane segments spans residues 241–261 (FYIF…PLGF), 271–291 (VSLG…VAEI), and 305–325 (YIAT…IMNV). Residues 326-462 (HHCGSEAKPV…WKKVAKVMDR (137 aa)) lie on the Cytoplasmic side of the membrane. Positions 364 to 395 (RREKEQEHRLEGGDMCRGGDGKSHLSSRNDDS) are disordered. Residues 463–483 (FFMWIFFIMVFFMSVLIIGKA) traverse the membrane as a helical segment.

It belongs to the ligand-gated ion channel (TC 1.A.9) family. Acetylcholine receptor (TC 1.A.9.1) subfamily. Alpha-9/CHRNA9 sub-subfamily. In terms of assembly, forms homo- or heteropentameric channels in conjunction with CHRNA10. The native outer hair cell receptor is composed of CHRNA9:CHRNA10 heterooligomers. Found in the stoichiometric form (CHRNA9)2:(CHRNA10)3. Expressed in hair cells of the cochlea (at protein level). Expressed in hair cells of the cochlea.

It is found in the synaptic cell membrane. Its subcellular location is the cell membrane. It catalyses the reaction Ca(2+)(in) = Ca(2+)(out). It carries out the reaction K(+)(in) = K(+)(out). The catalysed reaction is Na(+)(in) = Na(+)(out). The enzyme catalyses Mg(2+)(in) = Mg(2+)(out). With respect to regulation, activated by a myriad of ligands such as acetylcholine. AChR activity is inhibited by the antagonist alpha-conotoxins RgIA and GeXXA, small disulfide-constrained peptides from cone snails. Functionally, component of neuronal acetylcholine receptors (nAChRs) that function as pentameric, ligand-gated cation channels with high calcium permeability among other activities. nAChRs are excitatory neurotrasnmitter receptors formed by a collection of nAChR subunits known to mediate synaptic transmission in the nervous system and the neuromuscular junction. Each nAchR subunit confers differential attributes to channel properties, including activation, deactivation and desensitization kinetics, pH sensitivity, cation permeability, and binding to allosteric modulators. Forms either homopentamers or heteropentamers with CHRNA10. Expressed in the inner ear, in sympathetic neurons and in other non-neuronal cells, such as skin keratinocytes and lymphocytes. The channel is permeable to a range of divalent cations including calcium, the influx of which may activate a potassium current which hyperpolarizes the cell membrane. The polypeptide is Neuronal acetylcholine receptor subunit alpha-9 (CHRNA9) (Gallus gallus (Chicken)).